The sequence spans 233 residues: Rab-like protein 3 (233 aa).

The tract at residues 1–233 is small GTPase-like; sequence MASLDRVKVL…RFNFKSLHSD (233 aa). Residues 16 to 21, 148 to 150, and 179 to 180 each bind GTP; these read GVGKSS, KFD, and DC.

Belongs to the small GTPase superfamily. Rab family. As to quaternary structure, homodimer.

Functionally, required for KRAS signaling regulation and modulation of cell proliferation. Regulator of KRAS prenylation, and probably prenylation of other small GTPases. Required for lymphocyte development and function. Not required for myeloid cell development. This chain is Rab-like protein 3 (rabl3), found in Danio rerio (Zebrafish).